Here is a 61-residue protein sequence, read N- to C-terminus: DNA-binding protein 7a (61 aa).

A disordered region spans residues Asn-37–Lys-61. A compositionally biased stretch (basic and acidic residues) spans Val-45–Lys-61.

Belongs to the 7 kDa DNA-binding/endoribonuclease P2 family. In terms of assembly, monomer.

The protein localises to the cytoplasm. In terms of biological role, can constrain negative DNA supercoils. May be involved in maintaining the integrity of the genome at high temperature. The protein is DNA-binding protein 7a of Acidianus hospitalis (strain W1).